We begin with the raw amino-acid sequence, 83 residues long: Vitellogenesis-inhibiting hormone (83 aa).

Intrachain disulfides connect C15/C52, C32/C48, and C35/C61.

Found in the sinus glands of both male and female. Found also in the brain; the neuroendocrine structures of the protocerebrum.

It is found in the secreted. Its function is as follows. Inhibits secondary vitellogenesis in females. Has no hyperglycemic or molt-inhibiting activity. In Armadillidium vulgare (Pillbug), this protein is Vitellogenesis-inhibiting hormone.